The primary structure comprises 5082 residues: Malformin synthetase mlfA (5082 aa).

Positions 225-616 (ERHAANRPHS…CGRADTQVKL (392 aa)) are adenylation 1. The Carrier 1 domain occupies 749-822 (SRLEQKIQLA…EAASLAEVQE (74 aa)). Residue S783 is modified to O-(pantetheine 4'-phosphoryl)serine. The segment at 860 to 1291 (ENVFPCTTMQ…ALNTLSLLQA (432 aa)) is condensation 1. The interval 1319-1708 (DRWVTRQPEG…GRKDTQVKLR (390 aa)) is adenylation 2. Residues 1846–1923 (TPTLELERTL…QLAAEVGEPA (78 aa)) enclose the Carrier 2 domain. An O-(pantetheine 4'-phosphoryl)serine modification is found at S1883. Disordered regions lie at residues 1924-1953 (GQSASSASSTTEEGFTFSTPDDSSTNDGVD) and 1986-2012 (GGSSSNKTPSVSSSSSSSSSSKRKKNA). 2 stretches are compositionally biased toward low complexity: residues 1926-1950 (SASSASSTTEEGFTFSTPDDSSTND) and 1988-2005 (SSSNKTPSVSSSSSSSSS). Residues 2058–2473 (EDIYPATALQ…AVSCSDKETL (416 aa)) are condensation 2. The interval 2496–2888 (RRTPHAPAVC…IGRRDGQLKL (393 aa)) is adenylation 3. The Carrier 3 domain occupies 3024–3100 (RPVTSQEHEM…QLICHLNTIR (77 aa)). The residue at position 3061 (S3061) is an O-(pantetheine 4'-phosphoryl)serine. 2 condensation regions span residues 3117-3582 (WVAL…TYDQ) and 3603-4022 (NIYP…EHLV). The segment at 4047 to 4426 (HNSRQAVFDD…VGRKDNQIKF (380 aa)) is adenylation 4. Residues 4560-4636 (MPSTAAERKM…DLSDQAKSLI (77 aa)) form the Carrier 4 domain. Position 4597 is an O-(pantetheine 4'-phosphoryl)serine (S4597). The tract at residues 4673–5000 (DVLPTTSFQR…LQTIVQHQNN (328 aa)) is condensation 5.

This sequence belongs to the NRP synthetase family.

It participates in secondary metabolite biosynthesis. In terms of biological role, nonribosomal peptide synthetase; part of the gene cluster that mediates the biosynthesis of malformins, cyclic pentapeptides with a disulfide bond between 2 consecutive cysteins, that show potential anti-tumor as well as antimalarial and antitrypanosomal properties. The nonribosomal peptide synthetase mlfA is responsible of the formation of the cyclic pentapeptide. The malformin biosynthesis clusters in malformin-producing fungi also contain enzymes involved in the formation of the disulfide bond between the two consecutive cysteins within malformins, in addition to additional tailoring enzymes such as methyltransferases or oxidoreductases. They are also composed of up to 4 major facilitator superfamily transporters, and transcription factors probably involved in the regulation of the expression of those clusters. In Aspergillus luchuensis (strain CBS 106.47), this protein is Malformin synthetase mlfA.